The following is a 351-amino-acid chain: UDP-N-acetylglucosamine--N-acetylmuramyl-(pentapeptide) pyrophosphoryl-undecaprenol N-acetylglucosamine transferase (351 aa).

Residues 13-15 (TGG), asparagine 125, arginine 161, serine 189, isoleucine 241, 260-265 (ALTVCE), and glutamine 285 contribute to the UDP-N-acetyl-alpha-D-glucosamine site.

It belongs to the glycosyltransferase 28 family. MurG subfamily.

The protein localises to the cell inner membrane. The catalysed reaction is di-trans,octa-cis-undecaprenyl diphospho-N-acetyl-alpha-D-muramoyl-L-alanyl-D-glutamyl-meso-2,6-diaminopimeloyl-D-alanyl-D-alanine + UDP-N-acetyl-alpha-D-glucosamine = di-trans,octa-cis-undecaprenyl diphospho-[N-acetyl-alpha-D-glucosaminyl-(1-&gt;4)]-N-acetyl-alpha-D-muramoyl-L-alanyl-D-glutamyl-meso-2,6-diaminopimeloyl-D-alanyl-D-alanine + UDP + H(+). It participates in cell wall biogenesis; peptidoglycan biosynthesis. Its function is as follows. Cell wall formation. Catalyzes the transfer of a GlcNAc subunit on undecaprenyl-pyrophosphoryl-MurNAc-pentapeptide (lipid intermediate I) to form undecaprenyl-pyrophosphoryl-MurNAc-(pentapeptide)GlcNAc (lipid intermediate II). This is UDP-N-acetylglucosamine--N-acetylmuramyl-(pentapeptide) pyrophosphoryl-undecaprenol N-acetylglucosamine transferase from Haemophilus influenzae (strain PittGG).